The chain runs to 312 residues: Protein ABIL2 (312 aa).

Residues 173 to 287 (TIRETPPPPV…TEQQQPSKSK (115 aa)) form a disordered region. Over residues 183–199 (RKSTSQSSSPRQPPQRS) the composition is skewed to low complexity. The segment covering 230–251 (SVATRKSASISRPTTPSKSRSI) has biased composition (polar residues). The segment covering 269 to 279 (AFEKDNQKETE) has biased composition (basic and acidic residues).

This sequence belongs to the ABI family. In terms of assembly, binds SCAR.

It is found in the cytoplasm. The protein resides in the cytoskeleton. Involved in regulation of actin and microtubule organization. Part of a WAVE complex that activates the Arp2/3 complex. The polypeptide is Protein ABIL2 (ABIL2) (Arabidopsis thaliana (Mouse-ear cress)).